The sequence spans 232 residues: MSDDSSDSTSGAGSGRGRDSGLTERQRTILDVIRASVTSRGYPPSIREIGDAVGLTSTSSVAHQLRTLERKGYLRRDPNRPRAVDVRGSDDHAAPIVATDVAGSDSLPEPTFVPVLGRIAAGGPILAEEAVEDVFPLPRELVGEGSLFLLKVVGESMIDAAICDGDWVVVRQQSVADNGDIVAAMIDGEATVKTFKRTKGQVWLMPHNPAFDPIPGNDAAILGKVVTVIRKI.

The segment at 1-25 (MSDDSSDSTSGAGSGRGRDSGLTER) is disordered. Positions 16 to 25 (RGRDSGLTER) are enriched in basic and acidic residues. The segment at residues 46-66 (IREIGDAVGLTSTSSVAHQLR) is a DNA-binding region (H-T-H motif). Catalysis depends on for autocatalytic cleavage activity residues Ser156 and Lys193.

This sequence belongs to the peptidase S24 family. In terms of assembly, homodimer.

It carries out the reaction Hydrolysis of Ala-|-Gly bond in repressor LexA.. In terms of biological role, represses a number of genes involved in the response to DNA damage (SOS response), including recA and lexA. In the presence of single-stranded DNA, RecA interacts with LexA causing an autocatalytic cleavage which disrupts the DNA-binding part of LexA, leading to derepression of the SOS regulon and eventually DNA repair. In Mycolicibacterium vanbaalenii (strain DSM 7251 / JCM 13017 / BCRC 16820 / KCTC 9966 / NRRL B-24157 / PYR-1) (Mycobacterium vanbaalenii), this protein is LexA repressor.